Reading from the N-terminus, the 1055-residue chain is DIS3-like exonuclease 2 (1055 aa).

Disordered stretches follow at residues 1–109 (MKSA…SSPE) and 229–249 (SAAKPEGTNSPPEKDDKKARQ). Residues 17–32 (HKKKRNRPQKQNRRSK) are compositionally biased toward basic residues. The span at 39–59 (EDAHVEESLDGRDSSRSKAKD) shows a compositional bias: basic and acidic residues. Residues 97 to 108 (PRRSASPLLSSP) show a composition bias toward low complexity. The Mg(2+) site is built by aspartate 488 and aspartate 497.

Belongs to the RNR ribonuclease family. DIS3L2 subfamily. The cofactor is Mg(2+). Mn(2+) is required as a cofactor. In terms of tissue distribution, widely expressed.

It is found in the cytoplasm. It localises to the P-body. Functionally, 3'-5'-exoribonuclease that specifically recognizes RNAs polyuridylated at their 3' end and mediates their degradation. Component of an exosome-independent RNA degradation pathway that mediates degradation of cytoplasmic mRNAs that have been deadenylated and subsequently uridylated at their 3'. This chain is DIS3-like exonuclease 2 (SOV), found in Arabidopsis thaliana (Mouse-ear cress).